Reading from the N-terminus, the 606-residue chain is NADH-ubiquinone oxidoreductase chain 5 (606 aa).

Transmembrane regions (helical) follow at residues 4-24, 43-63, 84-104, 114-134, 140-160, 171-191, 213-233, 241-261, 272-292, 301-320, 325-347, 366-386, 413-433, 457-477, 485-505, and 582-602; these read FSSL…AINF, AFIT…EMII, FFSM…MEFS, INQF…LVTA, LFIG…WWYG, AILY…WFLI, LMGL…HPWL, TPVS…FLLI, FGQS…AMCA, IIAF…IGIN, AFLH…GSII, MPFT…MPFL, LVAT…ALLG, LLIG…PMTI, YLKM…LEIS, and GLIK…TTLL.

It belongs to the complex I subunit 5 family. As to quaternary structure, core subunit of respiratory chain NADH dehydrogenase (Complex I) which is composed of 45 different subunits.

The protein resides in the mitochondrion inner membrane. It catalyses the reaction a ubiquinone + NADH + 5 H(+)(in) = a ubiquinol + NAD(+) + 4 H(+)(out). Its function is as follows. Core subunit of the mitochondrial membrane respiratory chain NADH dehydrogenase (Complex I) which catalyzes electron transfer from NADH through the respiratory chain, using ubiquinone as an electron acceptor. Essential for the catalytic activity and assembly of complex I. The polypeptide is NADH-ubiquinone oxidoreductase chain 5 (MT-ND5) (Ovis aries (Sheep)).